The following is a 141-amino-acid chain: Hemoglobin subunit alpha-1 (141 aa).

A Globin domain is found at 1–141 (VLSEGNKKAI…VTYQLSSLYR (141 aa)). His59 contributes to the O2 binding site. Residue His88 coordinates heme b.

The protein belongs to the globin family. In terms of assembly, heterotetramer of two alpha chains and two beta chains. As to expression, red blood cells.

In terms of biological role, involved in oxygen transport from the lung to the various peripheral tissues. This is Hemoglobin subunit alpha-1 from Torpedo marmorata (Marbled electric ray).